Here is a 21-residue protein sequence, read N- to C-terminus: Brevinin-1OKb (21 aa).

Residue Lys21 is modified to Lysine amide.

Expressed by the skin glands.

The protein localises to the secreted. Its function is as follows. Antimicrobial peptide. This Nidirana okinavana (Kampira Falls frog) protein is Brevinin-1OKb.